We begin with the raw amino-acid sequence, 168 residues long: Cell division inhibitor SulA (168 aa).

Residues 106-112 form a ftsZ binding region; that stretch reads ALLTGNY. The segment at 161–168 is lon protease binding; the sequence is KIHSYLYH.

This sequence belongs to the SulA family. Interacts with FtsZ. Is rapidly cleaved and degraded by the Lon protease once DNA damage is repaired.

Component of the SOS system and an inhibitor of cell division. Accumulation of SulA causes rapid cessation of cell division and the appearance of long, non-septate filaments. In the presence of GTP, binds a polymerization-competent form of FtsZ in a 1:1 ratio, thus inhibiting FtsZ polymerization and therefore preventing it from participating in the assembly of the Z ring. This mechanism prevents the premature segregation of damaged DNA to daughter cells during cell division. The polypeptide is Cell division inhibitor SulA (Yersinia pestis bv. Antiqua (strain Antiqua)).